The primary structure comprises 605 residues: Glycerophosphodiester phosphodiesterase domain-containing protein 5 (605 aa).

The Cytoplasmic segment spans residues methionine 1–arginine 42. Cystine bridges form between cysteine 15/cysteine 18 and cysteine 25/cysteine 571. Residues leucine 43–tryptophan 63 form a helical membrane-spanning segment. The Extracellular portion of the chain corresponds to glutamate 64–proline 89. A helical membrane pass occupies residues isoleucine 90–cysteine 110. Over histidine 111–lysine 125 the chain is Cytoplasmic. Residues isoleucine 126–tryptophan 146 form a helical membrane-spanning segment. Residues glutamate 147–threonine 160 lie on the Extracellular side of the membrane. A helical membrane pass occupies residues alanine 161 to glycine 181. Residues glutamine 182 to glutamine 192 lie on the Cytoplasmic side of the membrane. Residues valine 193–isoleucine 213 form a helical membrane-spanning segment. Residues serine 214–tyrosine 496 are Extracellular-facing. Residues proline 228–proline 485 form the GP-PDE domain. 5 N-linked (GlcNAc...) asparagine glycosylation sites follow: asparagine 301, asparagine 336, asparagine 352, asparagine 374, and asparagine 448. The chain crosses the membrane as a helical span at residues cysteine 497 to leucine 517. The Cytoplasmic segment spans residues glutamine 518–arginine 605. The tract at residues serine 582–arginine 605 is disordered.

The protein belongs to the glycerophosphoryl diester phosphodiesterase family. As to quaternary structure, interacts with PRDX1; forms a mixed-disulfide with PRDX1, leading to disrupt intramolecular disulfide bond between Cys-25 and Cys-571. In terms of processing, intramolecular disulfide bond between Cys-25 and Cys-571 is reduced by PRDX1.

It localises to the endomembrane system. The protein resides in the cytoplasm. Its subcellular location is the perinuclear region. It is found in the cell projection. The protein localises to the growth cone. It catalyses the reaction a 1,2-diacyl-sn-glycero-3-phospho-(1D-myo-inositol-4,5-bisphosphate) + H2O = 1D-myo-inositol 1,4,5-trisphosphate + a 1,2-diacyl-sn-glycerol + H(+). It carries out the reaction sn-glycerol 3-phosphocholine + H2O = sn-glycerol 3-phosphate + choline + H(+). Glycerophosphodiester phosphodiesterase that promotes neurite formation and drives spinal motor neuron differentiation. Mediates the cleavage of glycosylphosphatidylinositol (GPI) anchor of target proteins: removes the GPI-anchor of RECK, leading to release RECK from the plasma membrane. May contribute to the osmotic regulation of cellular glycerophosphocholine. The sequence is that of Glycerophosphodiester phosphodiesterase domain-containing protein 5 from Homo sapiens (Human).